The chain runs to 203 residues: MAAVTVNSAKRGLRAELKQRLRALSAEERLRQSLLLTQKVIAHNQYQNSKRISIFLSMQDEVETEVIIKDIFKQGKICFIPRYQFQSNHMDMVRLTSSEEIALLPKTSWNIHQPGEGDVREEALSTGGLDLIFLPGLGFDKDGNRLGRGKGYYDTYLKRCVQHQEVKPYTMALAFKEQICPQIPVDEHDMKVDEVLYEDSPAS.

N-acetylalanine is present on alanine 2. Residues 10-14 and arginine 14 contribute to the ATP site; that span reads KRGLR. Substrate is bound by residues leucine 56, glutamate 61, and 148–152; that span reads RGKGY. An ATP-binding site is contributed by 145-153; it reads RLGRGKGYY. The Mg(2+) site is built by aspartate 154 and aspartate 189.

The protein belongs to the 5-formyltetrahydrofolate cyclo-ligase family. Monomer. Mg(2+) is required as a cofactor.

The protein localises to the cytoplasm. It carries out the reaction (6S)-5-formyl-5,6,7,8-tetrahydrofolate + ATP = (6R)-5,10-methenyltetrahydrofolate + ADP + phosphate. Contributes to tetrahydrofolate metabolism. Helps regulate carbon flow through the folate-dependent one-carbon metabolic network that supplies carbon for the biosynthesis of purines, thymidine and amino acids. Catalyzes the irreversible conversion of 5-formyltetrahydrofolate (5-CHO-H(4)PteGlu) to yield 5,10-methenyltetrahydrofolate. This chain is 5-formyltetrahydrofolate cyclo-ligase (Mthfs), found in Mus musculus (Mouse).